Consider the following 283-residue polypeptide: Bifunctional protein FolD (283 aa).

NADP(+)-binding positions include 165–167, serine 190, and valine 231; that span reads GRS.

This sequence belongs to the tetrahydrofolate dehydrogenase/cyclohydrolase family. As to quaternary structure, homodimer. Interacts with BrxC.

The enzyme catalyses (6R)-5,10-methylene-5,6,7,8-tetrahydrofolate + NADP(+) = (6R)-5,10-methenyltetrahydrofolate + NADPH. It carries out the reaction (6R)-5,10-methenyltetrahydrofolate + H2O = (6R)-10-formyltetrahydrofolate + H(+). It functions in the pathway one-carbon metabolism; tetrahydrofolate interconversion. Functionally, catalyzes the oxidation of 5,10-methylenetetrahydrofolate to 5,10-methenyltetrahydrofolate and then the hydrolysis of 5,10-methenyltetrahydrofolate to 10-formyltetrahydrofolate. The protein is Bifunctional protein FolD of Bacillus subtilis (strain 168).